A 95-amino-acid polypeptide reads, in one-letter code: Opiscorpine-4 (95 aa).

An N-terminal signal peptide occupies residues 1–19; it reads MNNKLTALIFLGLLAIASC. In terms of domain architecture, BetaSPN-type CS-alpha/beta spans 55–95; that stretch reads EFMCVANIDMTKSCDTHCQKASGEKGYCHGTKCKCGVPLSY. Intrachain disulfides connect Cys58-Cys82, Cys68-Cys87, and Cys72-Cys89.

Belongs to the long chain scorpion toxin family. Class 3 subfamily. In terms of tissue distribution, expressed by the venom gland.

The protein localises to the secreted. Functionally, has antimicrobial activity against yeasts and bacteria. The polypeptide is Opiscorpine-4 (Opistophthalmus carinatus (African yellow leg scorpion)).